Consider the following 108-residue polypeptide: MSTLSEGPVARLLKEKLFAAFQPKHLEVECESHLHNVPKGAEKHFRVQVVSDEFEGKRVIERHRLVNTCLAKELATTVHALRIDAIPTSKWDGQKQEDSPTCRGGFGK.

Residues Ser89–Lys108 are disordered.

This sequence belongs to the BolA/IbaG family.

This is Putative bolA-like protein K11H12.1 from Caenorhabditis elegans.